The sequence spans 175 residues: Two-on-two hemoglobin-3 (175 aa).

The heme site is built by Tyr-85 and His-98. The interval 153–175 is disordered; it reads QNEKPKHKPQCACKHAANKPAEE.

Belongs to the truncated hemoglobin family. Group II subfamily. Homodimer when ferric. Interacts with RGLG3 and RGLG4. Heme is required as a cofactor. As to expression, expressed ubiquitously, with higher levels in root tissue than in shoot tissue.

Its function is as follows. Hemoglobin-like protein that exhibits an unusual concentration-independent binding of O(2) and CO. May promote shoot organogenesis from root explants in vitro. Inhibits RGLG3 and RGLG4 ubiquitination activity. In Arabidopsis thaliana (Mouse-ear cress), this protein is Two-on-two hemoglobin-3 (GLB3).